Here is a 393-residue protein sequence, read N- to C-terminus: tRNA(Met) cytidine acetate ligase (393 aa).

G81, N142, and R167 together coordinate ATP.

Belongs to the TmcAL family.

It is found in the cytoplasm. It carries out the reaction cytidine(34) in elongator tRNA(Met) + acetate + ATP = N(4)-acetylcytidine(34) in elongator tRNA(Met) + AMP + diphosphate. Functionally, catalyzes the formation of N(4)-acetylcytidine (ac(4)C) at the wobble position of elongator tRNA(Met), using acetate and ATP as substrates. First activates an acetate ion to form acetyladenylate (Ac-AMP) and then transfers the acetyl group to tRNA to form ac(4)C34. The protein is tRNA(Met) cytidine acetate ligase of Bacillus anthracis (strain A0248).